A 242-amino-acid polypeptide reads, in one-letter code: uncharacterized protein (242 aa).

The S4 RNA-binding domain maps to 2 to 62 (EKAYKLLSVQ…VEKPSVIFED (61 aa)). Asp93 is an active-site residue.

The protein belongs to the pseudouridine synthase RluA family.

The enzyme catalyses a uridine in RNA = a pseudouridine in RNA. This is an uncharacterized protein from Helicobacter pylori (strain J99 / ATCC 700824) (Campylobacter pylori J99).